Here is a 248-residue protein sequence, read N- to C-terminus: MAQELGCRMGQVEQMIRYAYWNSKSQGIVVGVSGGVDSALAAAFCCRAIGPEKVLGLSLPASVSNPQDLSDAQELCAMLGMEHRVVLIDPMLAAFKTIPGFVETPYLLGNLMARIRMTVLYYHANRDHRLVCGTSNRSEAMLGYCTKYGDNAADFQPIVHLYKTDVYEMAKEVKIPKAILEKTPSAGLWAGQSDEGEIGLSYAEIDAALKNLEANGWKAGTPSEEKVLSRAQANAHKRLAAPNLLSVP.

31 to 38 (GVSGGVDS) contributes to the ATP binding site. Position 37 (D37) interacts with Mg(2+). A deamido-NAD(+)-binding site is contributed by R114. T134 provides a ligand contact to ATP. E139 serves as a coordination point for Mg(2+). K147 and D154 together coordinate deamido-NAD(+). Residues K163 and S185 each coordinate ATP. 236–237 (HK) provides a ligand contact to deamido-NAD(+).

This sequence belongs to the NAD synthetase family. Homodimer.

It carries out the reaction deamido-NAD(+) + NH4(+) + ATP = AMP + diphosphate + NAD(+) + H(+). It participates in cofactor biosynthesis; NAD(+) biosynthesis; NAD(+) from deamido-NAD(+) (ammonia route): step 1/1. Catalyzes the ATP-dependent amidation of deamido-NAD to form NAD. Uses ammonia as a nitrogen source. This chain is NH(3)-dependent NAD(+) synthetase, found in Methanoregula boonei (strain DSM 21154 / JCM 14090 / 6A8).